We begin with the raw amino-acid sequence, 176 residues long: Cytochrome b (176 aa).

The next 3 membrane-spanning stretches (helical) occupy residues 33-53, 77-98, and 113-133; these read FGSLLGICLALQILTGIFLAM, WVLRYLHANGASMFFICLYLHV, and WNMGVILLFAVMATAFMGYVL. Residues histidine 83 and histidine 97 each coordinate heme b.

Belongs to the cytochrome b family. In terms of assembly, the cytochrome bc1 complex contains 11 subunits: 3 respiratory subunits (MT-CYB, CYC1 and UQCRFS1), 2 core proteins (UQCRC1 and UQCRC2) and 6 low-molecular weight proteins (UQCRH/QCR6, UQCRB/QCR7, UQCRQ/QCR8, UQCR10/QCR9, UQCR11/QCR10 and a cleavage product of UQCRFS1). This cytochrome bc1 complex then forms a dimer. Heme b is required as a cofactor.

The protein resides in the mitochondrion inner membrane. Component of the ubiquinol-cytochrome c reductase complex (complex III or cytochrome b-c1 complex) that is part of the mitochondrial respiratory chain. The b-c1 complex mediates electron transfer from ubiquinol to cytochrome c. Contributes to the generation of a proton gradient across the mitochondrial membrane that is then used for ATP synthesis. This is Cytochrome b (MT-CYB) from Lasionycteris noctivagans (Silver-haired bat).